A 188-amino-acid chain; its full sequence is Putative manganese efflux pump MntP (188 aa).

The next 6 membrane-spanning stretches (helical) occupy residues 2 to 22 (LYIE…AVSV), 40 to 60 (IASV…TMGL), 66 to 86 (ICAF…GKMI), 107 to 127 (LCGL…SLAI), 133 to 153 (LLQA…GVYF), and 167 to 187 (LIGG…HLFF).

It belongs to the MntP (TC 9.B.29) family.

It is found in the cell inner membrane. Functionally, probably functions as a manganese efflux pump. This Parabacteroides distasonis (strain ATCC 8503 / DSM 20701 / CIP 104284 / JCM 5825 / NCTC 11152) protein is Putative manganese efflux pump MntP.